The sequence spans 294 residues: Lysozyme M1 (294 aa).

A Ch-type lysozyme domain is found at 81-294; that stretch reads GVQGIDVSHW…RLLALANNTA (214 aa). Residues D86, D175, and E177 contribute to the active site. Residues C185 and C224 are joined by a disulfide bond.

This sequence belongs to the glycosyl hydrolase 25 family.

Its subcellular location is the secreted. The catalysed reaction is Hydrolysis of (1-&gt;4)-beta-linkages between N-acetylmuramic acid and N-acetyl-D-glucosamine residues in a peptidoglycan and between N-acetyl-D-glucosamine residues in chitodextrins.. Its function is as follows. This enzyme has both lysozyme (acetylmuramidase) and diacetylmuramidase activities. This Streptomyces globisporus protein is Lysozyme M1 (acm).